We begin with the raw amino-acid sequence, 127 residues long: uncharacterized protein (127 aa).

This is an uncharacterized protein from Saccharomyces cerevisiae (strain ATCC 204508 / S288c) (Baker's yeast).